The chain runs to 73 residues: Translation initiation factor IF-1 (73 aa).

The 72-residue stretch at 1–72 folds into the S1-like domain; sequence MAKDDVIEVE…TKGRITYRFI (72 aa).

The protein belongs to the IF-1 family. Component of the 30S ribosomal translation pre-initiation complex which assembles on the 30S ribosome in the order IF-2 and IF-3, IF-1 and N-formylmethionyl-tRNA(fMet); mRNA recruitment can occur at any time during PIC assembly.

It localises to the cytoplasm. Functionally, one of the essential components for the initiation of protein synthesis. Stabilizes the binding of IF-2 and IF-3 on the 30S subunit to which N-formylmethionyl-tRNA(fMet) subsequently binds. Helps modulate mRNA selection, yielding the 30S pre-initiation complex (PIC). Upon addition of the 50S ribosomal subunit IF-1, IF-2 and IF-3 are released leaving the mature 70S translation initiation complex. This chain is Translation initiation factor IF-1, found in Lactobacillus acidophilus (strain ATCC 700396 / NCK56 / N2 / NCFM).